Consider the following 173-residue polypeptide: Transcriptional repressor NrdR (173 aa).

A zinc finger spans residues 3–34 (CPYCGSLDTQVKDSRPTEDNTAIRRRRVCPDC). Residues 49-139 (LMVVKRSGRR…VYRNFREARD (91 aa)) enclose the ATP-cone domain.

This sequence belongs to the NrdR family. Requires Zn(2+) as cofactor.

Negatively regulates transcription of bacterial ribonucleotide reductase nrd genes and operons by binding to NrdR-boxes. The polypeptide is Transcriptional repressor NrdR (Azorhizobium caulinodans (strain ATCC 43989 / DSM 5975 / JCM 20966 / LMG 6465 / NBRC 14845 / NCIMB 13405 / ORS 571)).